The following is a 99-amino-acid chain: Large ribosomal subunit protein uL23 (99 aa).

The protein belongs to the universal ribosomal protein uL23 family. As to quaternary structure, part of the 50S ribosomal subunit. Contacts protein L29, and trigger factor when it is bound to the ribosome.

In terms of biological role, one of the early assembly proteins it binds 23S rRNA. One of the proteins that surrounds the polypeptide exit tunnel on the outside of the ribosome. Forms the main docking site for trigger factor binding to the ribosome. The chain is Large ribosomal subunit protein uL23 from Francisella philomiragia subsp. philomiragia (strain ATCC 25017 / CCUG 19701 / FSC 153 / O#319-036).